Consider the following 699-residue polypeptide: Conditioned medium factor (699 aa).

The N-terminal stretch at Met-1–Gly-18 is a signal peptide. N-linked (GlcNAc...) asparagine glycosylation is found at Asn-130, Asn-283, Asn-346, and Asn-430. The interval Ser-680–Trp-699 is disordered.

Post-translationally, N- and O-glycosylated. In terms of processing, the N-terminus is blocked.

Functionally, involved in cell density sensing and might synchronize the onset of development by triggering aggregation when a majority of the cells in a given area have starved. The chain is Conditioned medium factor (cmfA) from Dictyostelium discoideum (Social amoeba).